A 41-amino-acid chain; its full sequence is MRDLKTYLSVAPVLSTLWFGALAGLLIEINRFFPDALTLSL.

A helical membrane pass occupies residues 7–27 (YLSVAPVLSTLWFGALAGLLI).

This sequence belongs to the PsaJ family.

Its subcellular location is the plastid. It is found in the chloroplast thylakoid membrane. May help in the organization of the PsaE and PsaF subunits. In Jasminum nudiflorum (Winter jasmine), this protein is Photosystem I reaction center subunit IX.